Consider the following 206-residue polypeptide: Protein GrpE (206 aa).

This sequence belongs to the GrpE family. In terms of assembly, homodimer.

It is found in the cytoplasm. Functionally, participates actively in the response to hyperosmotic and heat shock by preventing the aggregation of stress-denatured proteins, in association with DnaK and GrpE. It is the nucleotide exchange factor for DnaK and may function as a thermosensor. Unfolded proteins bind initially to DnaJ; upon interaction with the DnaJ-bound protein, DnaK hydrolyzes its bound ATP, resulting in the formation of a stable complex. GrpE releases ADP from DnaK; ATP binding to DnaK triggers the release of the substrate protein, thus completing the reaction cycle. Several rounds of ATP-dependent interactions between DnaJ, DnaK and GrpE are required for fully efficient folding. The polypeptide is Protein GrpE (Shewanella sp. (strain W3-18-1)).